We begin with the raw amino-acid sequence, 372 residues long: Chaperone protein DnaJ (372 aa).

The region spanning 5-69 is the J domain; it reads EFYDRLGVSK…QKRAAYDQYG (65 aa). The segment at 129-211 adopts a CR-type zinc-finger fold; it reads GTEKEVKYHR…CHGTGHEKQA (83 aa). Residues C142, C145, C159, C162, C185, C188, C199, and C202 each contribute to the Zn(2+) site. CXXCXGXG motif repeat units lie at residues 142 to 149, 159 to 166, 185 to 192, and 199 to 206; these read CRTCNGSG, CGRCHGAG, CDVCHGRG, and CTTCHGTG.

The protein belongs to the DnaJ family. In terms of assembly, homodimer. It depends on Zn(2+) as a cofactor.

The protein resides in the cytoplasm. Participates actively in the response to hyperosmotic and heat shock by preventing the aggregation of stress-denatured proteins and by disaggregating proteins, also in an autonomous, DnaK-independent fashion. Unfolded proteins bind initially to DnaJ; upon interaction with the DnaJ-bound protein, DnaK hydrolyzes its bound ATP, resulting in the formation of a stable complex. GrpE releases ADP from DnaK; ATP binding to DnaK triggers the release of the substrate protein, thus completing the reaction cycle. Several rounds of ATP-dependent interactions between DnaJ, DnaK and GrpE are required for fully efficient folding. Also involved, together with DnaK and GrpE, in the DNA replication of plasmids through activation of initiation proteins. In Streptococcus pneumoniae (strain ATCC BAA-255 / R6), this protein is Chaperone protein DnaJ.